A 161-amino-acid chain; its full sequence is MAEPSLPLSFLCLLALSSACYIQNCPRGGKRALGDTALRQCLPCGPGNRGRCFGPGICCGAELGCYLGTAETRRCAEEDYMPSPCQAGGQPCGSDGRCAANGVCCSADTCAMDAVCLEEGSEQAEEAAEKNLTVLDGAAGDLLLRLMHLANRQQQGKQPGL.

A signal peptide spans 1-19 (MAEPSLPLSFLCLLALSSA). A disulfide bridge links Cys20 with Cys25. Gly28 is subject to Glycine amide. Cystine bridges form between Cys41–Cys85, Cys44–Cys58, Cys52–Cys75, Cys59–Cys65, Cys92–Cys104, Cys98–Cys116, and Cys105–Cys110.

Belongs to the vasopressin/oxytocin family. Post-translationally, seven disulfide bonds are present in neurophysin.

It localises to the secreted. Its function is as follows. Vasotocin is an antidiuretic hormone. The sequence is that of Vasotocin-neurophysin VT from Gallus gallus (Chicken).